We begin with the raw amino-acid sequence, 226 residues long: Lipoprotein-releasing system ATP-binding protein LolD 1 (226 aa).

The ABC transporter domain maps to 6–226 (LRLDKVTRSF…TLREGKVVAA (221 aa)). 42–49 (GPSGAGKS) contributes to the ATP binding site.

The protein belongs to the ABC transporter superfamily. Lipoprotein translocase (TC 3.A.1.125) family. As to quaternary structure, the complex is composed of two ATP-binding proteins (LolD) and two transmembrane proteins (LolC and LolE).

Its subcellular location is the cell inner membrane. In terms of biological role, part of the ABC transporter complex LolCDE involved in the translocation of mature outer membrane-directed lipoproteins, from the inner membrane to the periplasmic chaperone, LolA. Responsible for the formation of the LolA-lipoprotein complex in an ATP-dependent manner. The polypeptide is Lipoprotein-releasing system ATP-binding protein LolD 1 (Rhodospirillum rubrum (strain ATCC 11170 / ATH 1.1.1 / DSM 467 / LMG 4362 / NCIMB 8255 / S1)).